The chain runs to 366 residues: tRNA N6-adenosine threonylcarbamoyltransferase (366 aa).

Residues histidine 119 and histidine 123 each contribute to the Fe cation site. Residues 142-146, aspartate 175, glycine 188, aspartate 192, and asparagine 281 each bind substrate; that span reads LVSGG. Aspartate 309 contacts Fe cation.

The protein belongs to the KAE1 / TsaD family. Requires Fe(2+) as cofactor.

The protein resides in the cytoplasm. The catalysed reaction is L-threonylcarbamoyladenylate + adenosine(37) in tRNA = N(6)-L-threonylcarbamoyladenosine(37) in tRNA + AMP + H(+). In terms of biological role, required for the formation of a threonylcarbamoyl group on adenosine at position 37 (t(6)A37) in tRNAs that read codons beginning with adenine. Is involved in the transfer of the threonylcarbamoyl moiety of threonylcarbamoyl-AMP (TC-AMP) to the N6 group of A37, together with TsaE and TsaB. TsaD likely plays a direct catalytic role in this reaction. The chain is tRNA N6-adenosine threonylcarbamoyltransferase from Synechococcus sp. (strain JA-3-3Ab) (Cyanobacteria bacterium Yellowstone A-Prime).